The chain runs to 160 residues: 2-C-methyl-D-erythritol 2,4-cyclodiphosphate synthase (160 aa).

Positions 8 and 10 each coordinate a divalent metal cation. 4-CDP-2-C-methyl-D-erythritol 2-phosphate is bound by residues 8 to 10 and 34 to 35; these read DVH and HS. Position 42 (His42) interacts with a divalent metal cation. 4-CDP-2-C-methyl-D-erythritol 2-phosphate contacts are provided by residues 56–58, 61–65, 100–106, 132–135, Phe139, and Arg142; these read DIG, FPDTD, AQAPKML, and TTTE.

The protein belongs to the IspF family. Homotrimer. It depends on a divalent metal cation as a cofactor.

The catalysed reaction is 4-CDP-2-C-methyl-D-erythritol 2-phosphate = 2-C-methyl-D-erythritol 2,4-cyclic diphosphate + CMP. It participates in isoprenoid biosynthesis; isopentenyl diphosphate biosynthesis via DXP pathway; isopentenyl diphosphate from 1-deoxy-D-xylulose 5-phosphate: step 4/6. In terms of biological role, involved in the biosynthesis of isopentenyl diphosphate (IPP) and dimethylallyl diphosphate (DMAPP), two major building blocks of isoprenoid compounds. Catalyzes the conversion of 4-diphosphocytidyl-2-C-methyl-D-erythritol 2-phosphate (CDP-ME2P) to 2-C-methyl-D-erythritol 2,4-cyclodiphosphate (ME-CPP) with a corresponding release of cytidine 5-monophosphate (CMP). The chain is 2-C-methyl-D-erythritol 2,4-cyclodiphosphate synthase from Proteus mirabilis (strain HI4320).